The chain runs to 83 residues: Exodeoxyribonuclease 7 small subunit (83 aa).

The protein belongs to the XseB family. In terms of assembly, heterooligomer composed of large and small subunits.

Its subcellular location is the cytoplasm. It carries out the reaction Exonucleolytic cleavage in either 5'- to 3'- or 3'- to 5'-direction to yield nucleoside 5'-phosphates.. In terms of biological role, bidirectionally degrades single-stranded DNA into large acid-insoluble oligonucleotides, which are then degraded further into small acid-soluble oligonucleotides. This is Exodeoxyribonuclease 7 small subunit from Afipia carboxidovorans (strain ATCC 49405 / DSM 1227 / KCTC 32145 / OM5) (Oligotropha carboxidovorans).